A 459-amino-acid chain; its full sequence is tRNA uridine(34) acetyltransferase (459 aa).

Residues 1–278 (MKKLSRTISG…VPPYVRISRV (278 aa)) are radical S-adenosyl-L-methionine (rSAM). The 266-residue stretch at 6–271 (RTISGVTPVA…IADIKALVPP (266 aa)) folds into the Radical SAM core domain. [4Fe-4S] cluster contacts are provided by cysteine 23, cysteine 27, and cysteine 30. An acetyl-CoA-binding site is contributed by lysine 77. An N-acetyltransferase region spans residues 308–459 (QKCRCIRCRE…VAGYMCKHLD (152 aa)). Cysteine 310, cysteine 312, and cysteine 315 together coordinate Zn(2+). Acetyl-CoA-binding positions include 386-389 (ELHV), 409-411 (LGR), and tyrosine 442.

The protein belongs to the ELP3 family. Homodimer. Requires [4Fe-4S] cluster as cofactor.

The catalysed reaction is uridine(34) in tRNA + acetyl-CoA + S-adenosyl-L-methionine + H2O = 5-(carboxymethyl)uridine(34) in tRNA + 5'-deoxyadenosine + L-methionine + CoA + 2 H(+). The protein operates within tRNA modification. In terms of biological role, tRNA uridine(34) acetyltransferase, which mediates formation of carboxymethyluridine in the wobble base at position 34 in tRNAs. The proposed mechanism is the following: (i) recruits S-adenosyl-L-methionine and cleaves it to generate a 5'-deoxyadenosine radical (5'-dA) in the radical S-adenosyl-L-methionine (rSAM) region, (ii) hydrolyzes acetyl-CoA in the N-acetyltransferase domain and (iii) an acetyl radical is formed by the products of the two domains and (iv) is transferred onto the C5 position of uridine(34) in the bound tRNA molecule. Does not show protein lysine acetyltransferase activity. The protein is tRNA uridine(34) acetyltransferase of Dehalococcoides mccartyi (strain CBDB1).